The following is a 774-amino-acid chain: Chondroitin sulfate synthase 2 (774 aa).

The Cytoplasmic segment spans residues 1–15; that stretch reads MRASLLLSVLRPAGP. Residues 16–34 form a helical; Signal-anchor for type II membrane protein membrane-spanning segment; that stretch reads VAVGISLGFTLSLLSVTWV. Topologically, residues 35–774 are lumenal; the sequence is EEPCGPGPPQ…LFEQEQGNST (740 aa). The tract at residues 37-103 is disordered; sequence PCGPGPPQPG…AQPGQATKKA (67 aa). A compositionally biased stretch (polar residues) spans 54–67; the sequence is GNTNAARRPNSVQP. 2 N-linked (GlcNAc...) asparagine glycosylation sites follow: Asn-138 and Asn-361. Asp-616 serves as a coordination point for a divalent metal cation.

This sequence belongs to the chondroitin N-acetylgalactosaminyltransferase family. As to quaternary structure, interacts with PRKN. Mn(2+) is required as a cofactor. The cofactor is Co(2+). In terms of tissue distribution, isoform 1, isoform 2 and isoform 3 are expressed in brain (at protein level).

The protein resides in the golgi apparatus. Its subcellular location is the golgi stack membrane. It is found in the cytoplasm. It localises to the cytosol. The protein localises to the mitochondrion. The protein resides in the mitochondrion matrix. The catalysed reaction is 3-O-(beta-D-GlcA-(1-&gt;3)-beta-D-GalNAc-(1-&gt;4)-beta-D-GlcA-(1-&gt;3)-beta-D-Gal-(1-&gt;3)-beta-D-Gal-(1-&gt;4)-beta-D-Xyl)-L-seryl-[protein] + UDP-N-acetyl-alpha-D-galactosamine = 3-O-(beta-D-GalNAc-(1-&gt;4)-beta-D-GlcA-(1-&gt;3)-beta-D-GalNAc-(1-&gt;4)-beta-D-GlcA-(1-&gt;3)-beta-D-Gal-(1-&gt;3)-beta-D-Gal-(1-&gt;4)-beta-D-Xyl)-L-seryl-[protein] + UDP + H(+). The enzyme catalyses 3-O-{beta-D-GlcA-(1-&gt;3)-[beta-D-GalNAc-(1-&gt;4)-beta-D-GlcA-(1-&gt;3)](n)-beta-D-GalNAc-(1-&gt;4)-beta-D-GlcA-(1-&gt;3)-beta-D-Gal-(1-&gt;3)-beta-D-Gal-(1-&gt;4)-beta-D-Xyl}-L-seryl-[protein] + UDP-N-acetyl-alpha-D-galactosamine = 3-O-{[beta-D-GalNAc-(1-&gt;4)-beta-D-GlcA-(1-&gt;3)](n+1)-beta-D-GalNAc-(1-&gt;4)-beta-D-GlcA-(1-&gt;3)-beta-D-Gal-(1-&gt;3)-beta-D-Gal-(1-&gt;4)-beta-D-Xyl}-L-seryl-[protein] + UDP + H(+). It carries out the reaction 3-O-(beta-D-GalNAc-(1-&gt;4)-beta-D-GlcA-(1-&gt;3)-beta-D-Gal-(1-&gt;3)-beta-D-Gal-(1-&gt;4)-beta-D-Xyl)-L-seryl-[protein] + UDP-alpha-D-glucuronate = 3-O-(beta-D-GlcA-(1-&gt;3)-beta-D-GalNAc-(1-&gt;4)-beta-D-GlcA-(1-&gt;3)-beta-D-Gal-(1-&gt;3)-beta-D-Gal-(1-&gt;4)-beta-D-Xyl)-L-seryl-[protein] + UDP + H(+). It catalyses the reaction 3-O-{[beta-D-GalNAc-(1-&gt;4)-beta-D-GlcA-(1-&gt;3)](n)-beta-D-GalNAc-(1-&gt;4)-beta-D-GlcA-(1-&gt;3)-beta-D-Gal-(1-&gt;3)-beta-D-Gal-(1-&gt;4)-beta-D-Xyl}-L-seryl-[protein] + UDP-alpha-D-glucuronate = 3-O-{beta-D-GlcA-(1-&gt;3)-[beta-D-GalNAc-(1-&gt;4)-beta-D-GlcA-(1-&gt;3)](n)-beta-D-GalNAc-(1-&gt;4)-beta-D-GlcA-(1-&gt;3)-beta-D-Gal-(1-&gt;3)-beta-D-Gal-(1-&gt;4)-beta-D-Xyl}-L-seryl-[protein] + UDP + H(+). In terms of biological role, has both beta-1,3-glucuronic acid and beta-1,4-N-acetylgalactosamine transferase activity. Transfers glucuronic acid (GlcUA) from UDP-GlcUA and N-acetylgalactosamine (GalNAc) from UDP-GalNAc to the non-reducing end of the elongating chondroitin polymer. Seems to act as a specific activating factor for CHSY1 in chondroitin polymerization. Functionally, may facilitate PRKN transport into the mitochondria. In collaboration with PRKN, may enhance cell viability and protect cells from oxidative stress. This is Chondroitin sulfate synthase 2 from Mus musculus (Mouse).